Here is a 98-residue protein sequence, read N- to C-terminus: uncharacterized protein (98 aa).

This is an uncharacterized protein from Thermotoga maritima (strain ATCC 43589 / DSM 3109 / JCM 10099 / NBRC 100826 / MSB8).